The primary structure comprises 94 residues: Large ribosomal subunit protein uL23 (94 aa).

It belongs to the universal ribosomal protein uL23 family. Part of the 50S ribosomal subunit. Contacts protein L29, and trigger factor when it is bound to the ribosome.

Its function is as follows. One of the early assembly proteins it binds 23S rRNA. One of the proteins that surrounds the polypeptide exit tunnel on the outside of the ribosome. Forms the main docking site for trigger factor binding to the ribosome. The protein is Large ribosomal subunit protein uL23 of Symbiobacterium thermophilum (strain DSM 24528 / JCM 14929 / IAM 14863 / T).